We begin with the raw amino-acid sequence, 170 residues long: Large ribosomal subunit protein uL10 (170 aa).

This sequence belongs to the universal ribosomal protein uL10 family. In terms of assembly, part of the ribosomal stalk of the 50S ribosomal subunit. The N-terminus interacts with L11 and the large rRNA to form the base of the stalk. The C-terminus forms an elongated spine to which L12 dimers bind in a sequential fashion forming a multimeric L10(L12)X complex.

Forms part of the ribosomal stalk, playing a central role in the interaction of the ribosome with GTP-bound translation factors. The sequence is that of Large ribosomal subunit protein uL10 from Nitratiruptor sp. (strain SB155-2).